The primary structure comprises 340 residues: PRKC apoptosis WT1 regulator protein (340 aa).

The segment covering 1–18 (MATGGYRTSSGLGGSTTD) has biased composition (polar residues). The segment at 1–253 (MATGGYRTSS…TDRSGFPRYN (253 aa)) is disordered. Residues 47–82 (SDAAGKPPAGALGTPAAAAANELNNNLPGGAPAAPA) are compositionally biased toward low complexity. The short motif at 68–72 (ELNNN) is the B30.2/SPRY domain-binding motif element. The residue at position 108 (serine 108) is a Phosphoserine. Residues 145–161 (RKGKGQIEKRKLREKRR) carry the Nuclear localization signal motif. A selective for apoptosis induction in cancer cells (SAC) region spans residues 145-203 (RKGKGQIEKRKLREKRRSTGVVNIPAAECLDEYEDDEAGQKERKREDAITQQNTIQNEA). The residue at position 163 (threonine 163) is a Phosphothreonine; by PKA. Positions 182–192 (AGQKERKREDA) are enriched in basic and acidic residues. Residues 186–206 (ERKREDAITQQNTIQNEAVNL) adopt a coiled-coil conformation. Positions 193-203 (ITQQNTIQNEA) are enriched in polar residues. At serine 231 the chain carries Phosphoserine. Basic and acidic residues predominate over residues 242–253 (SRTDRSGFPRYN). Positions 300–340 (IGKLKEEIDLLNRDLDDIEDENEQLKQENKTLLKVVGQLTR) are leucine-zipper.

In terms of assembly, homooligomer. Interacts (via the C-terminal region) with WT1. Interacts with THAP1. Interacts with AATF. Interacts with BACE1. Interacts with SPSB1 (via B30.2/SPRY domain); this interaction is direct and occurs in association with the Elongin BC complex. Interacts with SPSB2 (via B30.2/SPRY domain); this interaction occurs in association with the Elongin BC complex. Interacts with SPSB4 (via B30.2/SPRY domain); this interaction occurs in association with the Elongin BC complex. Component of a ternary complex composed of SQSTM1 and PRKCZ. Interacts with actin. Post-translationally, preferentially phosphorylated at the Thr-163 by PKC in cancer cells. As to expression, widely expressed. Expression is elevated in various neurodegenerative diseases such as amyotrophic lateral sclerosis, Alzheimer, Parkinson and Huntington diseases and stroke. Down-regulated in several cancers.

The protein resides in the cytoplasm. Its subcellular location is the nucleus. In terms of biological role, pro-apoptotic protein capable of selectively inducing apoptosis in cancer cells, sensitizing the cells to diverse apoptotic stimuli and causing regression of tumors in animal models. Induces apoptosis in certain cancer cells by activation of the Fas prodeath pathway and coparallel inhibition of NF-kappa-B transcriptional activity. Inhibits the transcriptional activation and augments the transcriptional repression mediated by WT1. Down-regulates the anti-apoptotic protein BCL2 via its interaction with WT1. Also seems to be a transcriptional repressor by itself. May be directly involved in regulating the amyloid precursor protein (APP) cleavage activity of BACE1. The sequence is that of PRKC apoptosis WT1 regulator protein (PAWR) from Homo sapiens (Human).